The following is a 227-amino-acid chain: Cytosolic-abundant heat soluble protein 106094 (227 aa).

The segment at 1–28 (MEAMNMNIPRDAMFVPPPESEQNGYHEK) is disordered. Residues 90 to 140 (VEEARRDYAAKTRENEMLGQQYEKELERKSEAYRKHQEVEADKIRKELEKQ) adopt a coiled-coil conformation. CAHS motif regions lie at residues 122–140 (YRKHQEVEADKIRKELEKQ) and 159–177 (QKRMIDLECRYAKKDMDRE). The tract at residues 198-227 (LDSSAAGTESGGHVVSQSEKFTERNREMKR) is disordered. A compositionally biased stretch (basic and acidic residues) spans 217–227 (KFTERNREMKR).

The protein belongs to the Cytosolic-abundant heat soluble protein (CAHS) family.

The protein localises to the cytoplasm. In terms of biological role, CAHS proteins are cytosolic heat soluble proteins that seem to contribute to the anhydrobiosis in tardigrades, but their specific mechanisms are yet to be identified. It is possible that protection during anhydrobiosis might occur via the stabilization of vitrifying small molecules such as sugars, but not via the direct glass transition of CAHS proteins themselves. The sequence is that of Cytosolic-abundant heat soluble protein 106094 from Paramacrobiotus richtersi (Water bear).